A 250-amino-acid chain; its full sequence is Probable transcriptional regulatory protein Nther_1800 (250 aa).

The protein belongs to the TACO1 family.

It is found in the cytoplasm. The polypeptide is Probable transcriptional regulatory protein Nther_1800 (Natranaerobius thermophilus (strain ATCC BAA-1301 / DSM 18059 / JW/NM-WN-LF)).